The following is a 208-amino-acid chain: Imidazoleglycerol-phosphate dehydratase (208 aa).

The interval 1 to 22 (MTEDTETSSTGAGADDRTAAIS) is disordered.

Belongs to the imidazoleglycerol-phosphate dehydratase family.

The protein localises to the cytoplasm. It carries out the reaction D-erythro-1-(imidazol-4-yl)glycerol 3-phosphate = 3-(imidazol-4-yl)-2-oxopropyl phosphate + H2O. It functions in the pathway amino-acid biosynthesis; L-histidine biosynthesis; L-histidine from 5-phospho-alpha-D-ribose 1-diphosphate: step 6/9. The sequence is that of Imidazoleglycerol-phosphate dehydratase from Haloquadratum walsbyi (strain DSM 16790 / HBSQ001).